Here is a 365-residue protein sequence, read N- to C-terminus: Zinc finger protein lsy-2 (365 aa).

Residues 1–36 (MLTRRNAKQSQRNSADQSLSEFNSSSMTHGSNQSVY) are disordered. Residues 8–36 (KQSQRNSADQSLSEFNSSSMTHGSNQSVY) show a composition bias toward polar residues. 5 C2H2-type zinc fingers span residues 78–100 (HQCN…AVIH), 106–128 (FRCD…RSVH), 134–156 (HACP…LRTH), 264–287 (HDCP…TLEH), and 296–318 (FFCE…MSYH).

The protein resides in the nucleus speckle. In terms of biological role, involved in transcriptional regulation. Required to specify left-right asymmetry of the ASE gustatory neurons, probably acting upstream of microRNA lsy-6. Involved in maintaining the distinction between somatic and germ cells, perhaps acting by repressing germ cell-specific genes in somatic cells. The sequence is that of Zinc finger protein lsy-2 from Caenorhabditis elegans.